We begin with the raw amino-acid sequence, 446 residues long: Phosphoglucosamine mutase (446 aa).

Ser103 (phosphoserine intermediate) is an active-site residue. 4 residues coordinate Mg(2+): Ser103, Asp242, Asp244, and Asp246. At Ser103 the chain carries Phosphoserine.

This sequence belongs to the phosphohexose mutase family. The cofactor is Mg(2+). Post-translationally, activated by phosphorylation.

The enzyme catalyses alpha-D-glucosamine 1-phosphate = D-glucosamine 6-phosphate. Its function is as follows. Catalyzes the conversion of glucosamine-6-phosphate to glucosamine-1-phosphate. This chain is Phosphoglucosamine mutase, found in Vibrio vulnificus (strain YJ016).